The chain runs to 947 residues: Plasma membrane ATPase 2 (947 aa).

The segment at 1-103 (MSSTEAKQYK…TDGVHAGQRV (103 aa)) is disordered. Over 1–144 (MSSTEAKQYK…AEENESLIVK (144 aa)) the chain is Cytoplasmic. The span at 7 to 22 (KQYKEKPSKEYLHASD) shows a compositional bias: basic and acidic residues. The segment covering 26–61 (PANNSAASSSSSSSTSTSASSSAAAVPRKAAAASAA) has biased composition (low complexity). Residues 62-74 (DDSDSDEDIDQLI) are compositionally biased toward acidic residues. The chain crosses the membrane as a helical span at residues 145 to 165 (FLMFFVGPIQFVMEAAAILAA). Topologically, residues 166-169 (GLSD) are extracellular. Residues 170–189 (WVDVGVICALLLLNASVGFI) form a helical membrane-spanning segment. Residues 190–320 (QEFQAGSIVD…VEGHFTEVLN (131 aa)) lie on the Cytoplasmic side of the membrane. Residues 321 to 342 (GIGIILLVLVIATLLLVWTACF) traverse the membrane as a helical segment. Topologically, residues 343–353 (YRTVGIVSILR) are extracellular. Residues 354 to 376 (YTLGITIIGVPVGLPAVVTTTMA) traverse the membrane as a helical segment. The Cytoplasmic segment spans residues 377 to 748 (VGAAYLAKKQ…IAILNNSLDI (372 aa)). The active-site 4-aspartylphosphate intermediate is Asp407. Residues Asp663 and Asp667 each coordinate Mg(2+). Residues 749-767 (NLIVFIAIFADVATLTIAY) traverse the membrane as a helical segment. Over 768-783 (DNAPYAPEPVKWNLPR) the chain is Extracellular. Residues 784 to 803 (LWGMSIILGIVLAIGSWITL) form a helical membrane-spanning segment. Residues 804–853 (TTMFLPNGGIIQNFGAMNGVMFLQISLTENWLIFVTRAAGPFWSSIPSWQ) lie on the Cytoplasmic side of the membrane. A helical membrane pass occupies residues 854 to 874 (LAGAVFAVDIIATMFTLFGWW). Residues 875-886 (SENWTDIVSVVR) are Extracellular-facing. Residues 887 to 903 (VWIWSIGIFCVLGGFYY) traverse the membrane as a helical segment. Over 904 to 947 (IMSTSQAFDRLMNGKSLKEKKSTRSVEDFMAAMQRVSTQHEKSS) the chain is Cytoplasmic.

This sequence belongs to the cation transport ATPase (P-type) (TC 3.A.3) family. Type IIIA subfamily.

Its subcellular location is the cell membrane. The enzyme catalyses ATP + H2O + H(+)(in) = ADP + phosphate + 2 H(+)(out). Its function is as follows. The plasma membrane ATPase of plants and fungi is a hydrogen ion pump. The proton gradient it generates drives the active transport of nutrients by H(+)-symport. The resulting external acidification and/or internal alkinization may mediate growth responses. The protein is Plasma membrane ATPase 2 (PMA2) of Saccharomyces cerevisiae (strain ATCC 204508 / S288c) (Baker's yeast).